A 348-amino-acid chain; its full sequence is Fe(3+) ions import ATP-binding protein FbpC (348 aa).

The region spanning 6–236 (LSLEGATVRF…PADAFVARFL (231 aa)) is the ABC transporter domain. Position 38–45 (38–45 (GPSGSGKS)) interacts with ATP.

Belongs to the ABC transporter superfamily. Fe(3+) ion importer (TC 3.A.1.10) family. The complex is composed of two ATP-binding proteins (FbpC), two transmembrane proteins (FbpB) and a solute-binding protein (FbpA).

It is found in the cell membrane. The enzyme catalyses Fe(3+)(out) + ATP + H2O = Fe(3+)(in) + ADP + phosphate + H(+). Functionally, part of the ABC transporter complex FbpABC involved in Fe(3+) ions import. Responsible for energy coupling to the transport system. This is Fe(3+) ions import ATP-binding protein FbpC from Streptomyces coelicolor (strain ATCC BAA-471 / A3(2) / M145).